The chain runs to 476 residues: Beta-xylosidase (476 aa).

The active-site Proton donor is E188. Residue E292 is the Nucleophile of the active site. N-linked (GlcNAc...) asparagine glycosylation occurs at N468.

The protein belongs to the glycosyl hydrolase 5 (cellulase A) family.

The protein localises to the secreted. The enzyme catalyses Hydrolysis of (1-&gt;4)-beta-D-xylans, to remove successive D-xylose residues from the non-reducing termini.. Functionally, catalyzes the hydrolysis of xylo-oligomers to xylose units and plays an important role in xylan degradation. Can also perform the transglycosylation of xylose and alcohol. Has no endoglucanase activity. In Phanerodontia chrysosporium (White-rot fungus), this protein is Beta-xylosidase.